Here is a 196-residue protein sequence, read N- to C-terminus: Nucleoside triphosphate pyrophosphatase (196 aa).

The active-site Proton acceptor is Asp-73.

It belongs to the Maf family. It depends on a divalent metal cation as a cofactor.

Its subcellular location is the cytoplasm. The catalysed reaction is a ribonucleoside 5'-triphosphate + H2O = a ribonucleoside 5'-phosphate + diphosphate + H(+). The enzyme catalyses a 2'-deoxyribonucleoside 5'-triphosphate + H2O = a 2'-deoxyribonucleoside 5'-phosphate + diphosphate + H(+). Nucleoside triphosphate pyrophosphatase. May have a dual role in cell division arrest and in preventing the incorporation of modified nucleotides into cellular nucleic acids. This chain is Nucleoside triphosphate pyrophosphatase, found in Maricaulis maris (strain MCS10) (Caulobacter maris).